The primary structure comprises 192 residues: ATP synthase protein MI25 (192 aa).

The helical transmembrane segment at 29–49 (ISIYNEEMIVARCFIGFLIFS) threads the bilayer.

It belongs to the ATPase protein MI25 family. As to quaternary structure, F-type ATPases have 2 components, CF(1) - the catalytic core - and CF(0) - the membrane proton channel. CF(1) has five subunits: alpha(3), beta(3), gamma(1), delta(1), epsilon(1). CF(0) has three main subunits: a, b and c.

The protein resides in the mitochondrion membrane. Its function is as follows. This is one of the chains of the nonenzymatic component (CF(0) subunit) of the mitochondrial ATPase complex. This chain is ATP synthase protein MI25, found in Triticum timopheevii (Timopheev's wheat).